Reading from the N-terminus, the 71-residue chain is MLIITRKKDESLMIGDNIEITVLKLEDGSVKLGINAPRETTILRKELYEAVKQENKKAMNIDMNLLKGLKK.

It belongs to the CsrA/RsmA family. Homodimer; the beta-strands of each monomer intercalate to form a hydrophobic core, while the alpha-helices form wings that extend away from the core.

It localises to the cytoplasm. In terms of biological role, a translational regulator that binds mRNA to regulate translation initiation and/or mRNA stability. Usually binds in the 5'-UTR at or near the Shine-Dalgarno sequence preventing ribosome-binding, thus repressing translation. Its main target seems to be the major flagellin gene, while its function is anatagonized by FliW. The protein is Translational regulator CsrA of Clostridium botulinum (strain Alaska E43 / Type E3).